Here is a 311-residue protein sequence, read N- to C-terminus: Malate dehydrogenase (311 aa).

Residues 7–13 (GAAGGIG) and Asp34 each bind NAD(+). Substrate-binding residues include Arg81 and Arg87. NAD(+) is bound by residues Asn94 and 117–119 (ITN). Residues Asn119 and Arg153 each coordinate substrate. The active-site Proton acceptor is the His177. Met227 is a binding site for NAD(+).

It belongs to the LDH/MDH superfamily. MDH type 1 family. In terms of assembly, homodimer.

The enzyme catalyses (S)-malate + NAD(+) = oxaloacetate + NADH + H(+). Catalyzes the reversible oxidation of malate to oxaloacetate. The protein is Malate dehydrogenase (mdh) of Vibrio cholerae serotype O1 (strain ATCC 39315 / El Tor Inaba N16961).